A 157-amino-acid chain; its full sequence is Catabolic 3-dehydroquinase (157 aa).

Residue Tyr-27 is the Proton acceptor of the active site. Asn-80, His-86, and Asp-93 together coordinate substrate. Residue His-106 is the Proton donor of the active site. Substrate contacts are provided by residues 107–108 and Arg-117; that span reads VS.

It belongs to the type-II 3-dehydroquinase family. Homododecamer. Adopts a ring-like structure, composed of an arrangement of two hexameric rings stacked on top of one another.

It catalyses the reaction 3-dehydroquinate = 3-dehydroshikimate + H2O. It functions in the pathway aromatic compound metabolism; 3,4-dihydroxybenzoate biosynthesis; 3,4-dihydroxybenzoate from 3-dehydroquinate: step 1/2. In terms of biological role, is involved in the catabolism of quinate. Allows the utilization of quinate as carbon source via the beta-ketoadipate pathway. The chain is Catabolic 3-dehydroquinase from Pyricularia oryzae (strain 70-15 / ATCC MYA-4617 / FGSC 8958) (Rice blast fungus).